The sequence spans 109 residues: Nascent polypeptide-associated complex protein (109 aa).

The NAC-A/B domain occupies 3-69 (PMNPKQLKKL…TEEERVVLKI (67 aa)).

Belongs to the NAC-alpha family. Homodimer. Interacts with the ribosome. Binds ribosomal RNA.

Functionally, contacts the emerging nascent chain on the ribosome. This Pyrococcus abyssi (strain GE5 / Orsay) protein is Nascent polypeptide-associated complex protein.